Consider the following 247-residue polypeptide: Probable transcriptional regulatory protein ETA_14870 (247 aa).

The interval 1 to 20 (MAGHSKWANTKHRKAAQDAK) is disordered.

It belongs to the TACO1 family.

Its subcellular location is the cytoplasm. The chain is Probable transcriptional regulatory protein ETA_14870 from Erwinia tasmaniensis (strain DSM 17950 / CFBP 7177 / CIP 109463 / NCPPB 4357 / Et1/99).